The sequence spans 52 residues: UPF0181 protein HI_1434.2 (52 aa).

It belongs to the UPF0181 family.

This chain is UPF0181 protein HI_1434.2, found in Haemophilus influenzae (strain ATCC 51907 / DSM 11121 / KW20 / Rd).